Here is a 689-residue protein sequence, read N- to C-terminus: MAREYSLLNTRNIGIMAHIDAGKTTTTERILFHTGKIHKIGETHEGASQMDWMAQEQERGITITSAATTAFWKNTRFNIIDTPGHVDFTVEVERSLRVLDGAVAVLDGQSGVEPQTETVWRQATNYKVPRIVFVNKMDKTGADFIYSVKTIGDRLGAKAAPIQLPIGAEENFTGIIDLVEMKAYEFDGKPEENYKEIEIPTNLLEQAKELRAHLVEVAVEYDEELLMKFLDGGEISISELKSAIRKGVINADFFPVLAGSAFKNKGVKLLLDAVVDYLPSPLDIPSIKGILPTGEEVERHADDTEPFSALAFKVMTDPFVGKLTFFRVYSGILTKGSYVLNSTKQQKERVGRILQMHANNRTEIEEVYSGDIATAVGLKNTTTGDTLCDEKGEIILESMVFPEPVIQLALEPKTKADQEKMSIALSKLAEEDPTFRTYTDDETGQTIIAGMGELHLDIIVDRMKREFNVATNVGAPQVSYRETIKLPGKAEGKYIKQSGGRGSYGHVVIEFEPNKDKGFEWVDKITGGRVSKEYINSARVGLENALRNGVIAGYPMIDVKATIVDGSMHEVDSNEMAYKIAASMALKEASKKMNPVVLEPIMNVEVTVPDEYYGDVMGNISSKRGIIEGSEQRGNAQTIKSKVPLTEMFGYATELRSFTQGRGNYTMIFSHYAEAPKAIADEIIKKSGK.

A tr-type G domain is found at 8–282 (LNTRNIGIMA…AVVDYLPSPL (275 aa)). GTP is bound by residues 17–24 (AHIDAGKT), 81–85 (DTPGH), and 135–138 (NKMD).

It belongs to the TRAFAC class translation factor GTPase superfamily. Classic translation factor GTPase family. EF-G/EF-2 subfamily.

Its subcellular location is the cytoplasm. In terms of biological role, catalyzes the GTP-dependent ribosomal translocation step during translation elongation. During this step, the ribosome changes from the pre-translocational (PRE) to the post-translocational (POST) state as the newly formed A-site-bound peptidyl-tRNA and P-site-bound deacylated tRNA move to the P and E sites, respectively. Catalyzes the coordinated movement of the two tRNA molecules, the mRNA and conformational changes in the ribosome. In Mycoplasma mycoides subsp. mycoides SC (strain CCUG 32753 / NCTC 10114 / PG1), this protein is Elongation factor G.